Reading from the N-terminus, the 383-residue chain is S-adenosylmethionine synthase (383 aa).

H15 provides a ligand contact to ATP. Position 17 (D17) interacts with Mg(2+). E43 serves as a coordination point for K(+). Residues E56 and Q99 each coordinate L-methionine. The segment at 99–109 (QSPDINQGVDR) is flexible loop. ATP contacts are provided by residues 164–166 (DAK), 230–231 (RF), D239, 245–246 (RK), A262, and K266. An L-methionine-binding site is contributed by D239. L-methionine is bound at residue K270.

Belongs to the AdoMet synthase family. In terms of assembly, homotetramer; dimer of dimers. Mg(2+) serves as cofactor. K(+) is required as a cofactor.

It is found in the cytoplasm. It carries out the reaction L-methionine + ATP + H2O = S-adenosyl-L-methionine + phosphate + diphosphate. Its pathway is amino-acid biosynthesis; S-adenosyl-L-methionine biosynthesis; S-adenosyl-L-methionine from L-methionine: step 1/1. Functionally, catalyzes the formation of S-adenosylmethionine (AdoMet) from methionine and ATP. The overall synthetic reaction is composed of two sequential steps, AdoMet formation and the subsequent tripolyphosphate hydrolysis which occurs prior to release of AdoMet from the enzyme. This is S-adenosylmethionine synthase from Actinobacillus pleuropneumoniae serotype 7 (strain AP76).